The sequence spans 701 residues: Elongation factor G (701 aa).

The region spanning 6–285 is the tr-type G domain; the sequence is HKVRNIGIMA…AVVAYLPNPL (280 aa). GTP contacts are provided by residues 15 to 22, 79 to 83, and 133 to 136; these read AHIDAGKT, DNPGH, and NKMD.

The protein belongs to the TRAFAC class translation factor GTPase superfamily. Classic translation factor GTPase family. EF-G/EF-2 subfamily.

Its subcellular location is the cytoplasm. Its function is as follows. Catalyzes the GTP-dependent ribosomal translocation step during translation elongation. During this step, the ribosome changes from the pre-translocational (PRE) to the post-translocational (POST) state as the newly formed A-site-bound peptidyl-tRNA and P-site-bound deacylated tRNA move to the P and E sites, respectively. Catalyzes the coordinated movement of the two tRNA molecules, the mRNA and conformational changes in the ribosome. The chain is Elongation factor G (fusA) from Micrococcus luteus (Micrococcus lysodeikticus).